The sequence spans 201 residues: Recombination protein RecR (201 aa).

Residues 60 to 75 (CSRCGNVDTVDPCIVC) form a C4-type zinc finger. Residues 83 to 178 (SVIIVVEDVS…KITRLAHGVP (96 aa)) form the Toprim domain.

The protein belongs to the RecR family.

Its function is as follows. May play a role in DNA repair. It seems to be involved in an RecBC-independent recombinational process of DNA repair. It may act with RecF and RecO. This chain is Recombination protein RecR, found in Rhizobium johnstonii (strain DSM 114642 / LMG 32736 / 3841) (Rhizobium leguminosarum bv. viciae).